A 912-amino-acid chain; its full sequence is Translation initiation factor IF-2 (912 aa).

The interval 185–204 (NATRPKRKTKEEKQKEREER) is disordered. The span at 193–204 (TKEEKQKEREER) shows a compositional bias: basic and acidic residues. In terms of domain architecture, tr-type G spans 411–581 (LRPPIVTIMG…LLEAELLDLK (171 aa)). Positions 420 to 427 (GHVDHGKT) are G1. 420-427 (GHVDHGKT) is a GTP binding site. Residues 445–449 (GITQH) are G2. Residues 467–470 (DTPG) form a G3 region. GTP is bound by residues 467-471 (DTPGH) and 521-524 (NKID). The tract at residues 521 to 524 (NKID) is G4. Positions 557–559 (SAK) are G5.

This sequence belongs to the TRAFAC class translation factor GTPase superfamily. Classic translation factor GTPase family. IF-2 subfamily.

It is found in the cytoplasm. Functionally, one of the essential components for the initiation of protein synthesis. Protects formylmethionyl-tRNA from spontaneous hydrolysis and promotes its binding to the 30S ribosomal subunits. Also involved in the hydrolysis of GTP during the formation of the 70S ribosomal complex. In Azobacteroides pseudotrichonymphae genomovar. CFP2, this protein is Translation initiation factor IF-2.